The primary structure comprises 109 residues: Lipoprotein BsmA (109 aa).

A signal peptide spans 1 to 24 (MVSRKRNSVIYRFASLLLVLMLSA). Residue C25 is the site of N-palmitoyl cysteine attachment. Residue C25 is the site of S-diacylglycerol cysteine attachment.

It belongs to the BhsA/McbA family.

Its subcellular location is the cell membrane. Its function is as follows. Involved in protection of biofilms against oxidative stress. The chain is Lipoprotein BsmA (bsmA) from Escherichia coli (strain K12).